Consider the following 264-residue polypeptide: Proliferating cell nuclear antigen (264 aa).

Residues 61 to 80 (RCDRNISMGMNLGNMAKMLK) mediate DNA binding.

It belongs to the PCNA family.

Its subcellular location is the nucleus. In terms of biological role, this protein is an auxiliary protein of DNA polymerase delta and is involved in the control of eukaryotic DNA replication by increasing the polymerase's processibility during elongation of the leading strand. This is Proliferating cell nuclear antigen from Daucus carota (Wild carrot).